A 490-amino-acid chain; its full sequence is Stomatal closure-related actin-binding protein 3 (490 aa).

This sequence belongs to the SCAB family. Expressed in roots, stems, leaves, siliques and flowers.

It localises to the cytoplasm. It is found in the cytoskeleton. In terms of biological role, probable plant-specific actin binding protein that bundles and stabilizes microfilaments (MFs). This Arabidopsis thaliana (Mouse-ear cress) protein is Stomatal closure-related actin-binding protein 3.